Here is a 216-residue protein sequence, read N- to C-terminus: Nucleolar protein 12 (216 aa).

A coiled-coil region spans residues 33–97 (GFHKRKVERK…LVTAKTESVQ (65 aa)). Residues 120-216 (LLGLPLPEQG…MTGKARHNGE (97 aa)) form a disordered region. Residues 129–140 (GDQDGSQEEEVS) show a composition bias toward acidic residues. Composition is skewed to basic residues over residues 171-183 (AHSR…KHPR) and 200-216 (KTQR…HNGE).

The protein belongs to the RRP17 family. Interacts with KIAA1191.

It localises to the nucleus. Its subcellular location is the nucleolus. The protein resides in the cytoplasm. Multifunctional RNA binding protein that plays a role in RNA metabolism and DNA maintenance. Participates in the resolution of DNA stress and the maintenance of genome integrity by localizing to sites of DNA insults. Also plays a role in proper nucleolar organization by limiting nucleolar size and regulating nucleolar number. Mechanistically, regulates the nucleolar levels of fibrillarin and nucleolin, two key players in pre-rRNA processing and ribosome assembly. The polypeptide is Nucleolar protein 12 (Nol12) (Rattus norvegicus (Rat)).